Reading from the N-terminus, the 156-residue chain is Large ribosomal subunit protein uL15 (156 aa).

The disordered stretch occupies residues 26–46 (GIGCGKGKTSGRGHKGQKARS). Residues 34-43 (TSGRGHKGQK) show a composition bias toward basic residues.

It belongs to the universal ribosomal protein uL15 family. Part of the 50S ribosomal subunit.

Its function is as follows. Binds to the 23S rRNA. In Ehrlichia canis (strain Jake), this protein is Large ribosomal subunit protein uL15.